A 181-amino-acid chain; its full sequence is Inner membrane-spanning protein YciB (181 aa).

The next 5 membrane-spanning stretches (helical) occupy residues 19 to 39 (FFDIYAATGALIVATLIQLIA), 50 to 70 (MHLITFALVASFGTATLIFHD), 80 to 100 (IVYALFAIALIAGQFLGKPIL), 118 to 138 (LTWYWVLFFVACGLINIYVAF), and 148 to 168 (FKVFGLTAATLVNTLLTVVYL).

Belongs to the YciB family.

The protein resides in the cell inner membrane. Plays a role in cell envelope biogenesis, maintenance of cell envelope integrity and membrane homeostasis. The protein is Inner membrane-spanning protein YciB of Shewanella amazonensis (strain ATCC BAA-1098 / SB2B).